The following is a 466-amino-acid chain: Asparagine--tRNA ligase (466 aa).

The protein belongs to the class-II aminoacyl-tRNA synthetase family. As to quaternary structure, homodimer.

The protein resides in the cytoplasm. The catalysed reaction is tRNA(Asn) + L-asparagine + ATP = L-asparaginyl-tRNA(Asn) + AMP + diphosphate + H(+). The chain is Asparagine--tRNA ligase from Klebsiella pneumoniae subsp. pneumoniae (strain ATCC 700721 / MGH 78578).